A 253-amino-acid chain; its full sequence is Putative cysteine-rich repeat secretory protein 33 (253 aa).

An N-terminal signal peptide occupies residues 1-28 (MFSSYSLCKCLVSFHILAIQVLISCASS). 2 Gnk2-homologous domains span residues 34–133 (EYLN…MIND) and 141–250 (YDNI…LYPF).

This sequence belongs to the cysteine-rich repeat secretory protein family.

It is found in the secreted. The chain is Putative cysteine-rich repeat secretory protein 33 (CRRSP33) from Arabidopsis thaliana (Mouse-ear cress).